A 4307-amino-acid chain; its full sequence is Cytoplasmic dynein 2 heavy chain 1 (4307 aa).

The stem stretch occupies residues 1-1650 (MANGTADVRK…CVQMVDSEFQ (1650 aa)). ATP is bound at residue 145–152 (LGIVLRRS). Residues 1074–1103 (NTLDKSAKLIKEKKIEFDDLEVTRKKLVDD) adopt a coiled-coil conformation. 4 AAA regions span residues 1651–1875 (YTYE…VLRG), 1938–2161 (ELSA…KQND), 2251–2505 (ADDF…WVLG), and 2617–2863 (HYGR…ESCK). ATP contacts are provided by residues 1689 to 1696 (GPAGTGKT), 1979 to 1986 (GPSGAGKS), 2291 to 2298 (GPEGCGKG), and 2655 to 2662 (GRSGVGRR). Residues 2881 to 3169 (AISSSKKKEL…AEVSKAQETI (289 aa)) form a stalk region. 3 coiled-coil regions span residues 2897 to 2982 (LQAG…KEVQ), 3109 to 3200 (LETE…LATL), and 3408 to 3442 (IQHEKPDLEEQKTKLLQQEEDKKIQLAKLEESLLE). 2 AAA regions span residues 3244 to 3473 (LCTE…LIQE) and 3690 to 3905 (MALF…IIDR).

It belongs to the dynein heavy chain family. In terms of assembly, the cytoplasmic dynein complex 2 is probably composed by a heavy chain DYNC2H1 homodimer and a number of DYNC2LI1 light intermediate chains.

Its subcellular location is the cytoplasm. The protein resides in the cytoskeleton. It localises to the cilium axoneme. The protein localises to the cell membrane. Its function is as follows. May function as a motor for intraflagellar retrograde transport. Functions in cilia biogenesis. May play a role in transport between endoplasmic reticulum and Golgi or organization of the Golgi in cells. This Homo sapiens (Human) protein is Cytoplasmic dynein 2 heavy chain 1 (DYNC2H1).